The primary structure comprises 727 residues: Catalase-peroxidase (727 aa).

A disordered region spans residues 1–21; it reads MDAKVEDNIAGKCPMGHGRGP. The tryptophyl-tyrosyl-methioninium (Trp-Tyr) (with M-243) cross-link spans 95 to 217; that stretch reads WHAAGTYRIT…LGAVQMGLIY (123 aa). The Proton acceptor role is filled by H96. Residues 217–243 constitute a cross-link (tryptophyl-tyrosyl-methioninium (Tyr-Met) (with W-95)); sequence YVNPEGPNGNPDPLASARDIRETFARM. H258 lines the heme b pocket.

The protein belongs to the peroxidase family. Peroxidase/catalase subfamily. In terms of assembly, homodimer or homotetramer. The cofactor is heme b. Formation of the three residue Trp-Tyr-Met cross-link is important for the catalase, but not the peroxidase activity of the enzyme.

It carries out the reaction H2O2 + AH2 = A + 2 H2O. The enzyme catalyses 2 H2O2 = O2 + 2 H2O. Bifunctional enzyme with both catalase and broad-spectrum peroxidase activity. Important for stationary phase survival. The chain is Catalase-peroxidase from Caulobacter vibrioides (strain ATCC 19089 / CIP 103742 / CB 15) (Caulobacter crescentus).